The chain runs to 64 residues: Large ribosomal subunit protein bL32 (64 aa).

Residues 1 to 28 (MAVQKSRVTPSRRGQRRSHDALTAKKLS) are disordered.

It belongs to the bacterial ribosomal protein bL32 family.

The chain is Large ribosomal subunit protein bL32 (rpmF) from Xylella fastidiosa (strain 9a5c).